A 131-amino-acid chain; its full sequence is MLYPALLCAALLLIAPLGHTEGRTLYPSPDAIQFVEQFLDRYNDLTLDDLENLVSSQPEEPSSAFTSGVKIAEYPKWADIPAQGDSTWLRLLKGTLANQKRAVTDRSRRGWNRGCFGLKLDRIGSMSGLGC.

Positions 1-22 are cleaved as a signal peptide; that stretch reads MLYPALLCAALLLIAPLGHTEG. Residues 23 to 109 constitute a propeptide that is removed on maturation; it reads RTLYPSPDAI…KRAVTDRSRR (87 aa). C115 and C131 form a disulfide bridge.

The protein belongs to the natriuretic peptide family. Expressed in brain and to a low extent in atrium.

Its subcellular location is the secreted. In terms of biological role, exhibits natriuretic and vasodepressor activity. Has a cGMP-stimulating activity. The polypeptide is C-type natriuretic peptide 2 (Oncorhynchus mykiss (Rainbow trout)).